A 127-amino-acid polypeptide reads, in one-letter code: Small ribosomal subunit protein uS8m (127 aa).

The protein belongs to the universal ribosomal protein uS8 family.

It is found in the mitochondrion. The protein is Small ribosomal subunit protein uS8m (RPS8) of Acanthamoeba castellanii (Amoeba).